We begin with the raw amino-acid sequence, 296 residues long: Tyrosine recombinase XerC (296 aa).

In terms of domain architecture, Core-binding (CB) spans 2 to 85 (ADQASWLERF…ALKQFGQFLL (84 aa)). One can recognise a Tyr recombinase domain in the interval 106 to 285 (TLPKNLDPDS…DFQHLAKVYD (180 aa)). Residues Arg145, Lys169, His237, Arg240, and His263 contribute to the active site. Residue Tyr272 is the O-(3'-phospho-DNA)-tyrosine intermediate of the active site.

This sequence belongs to the 'phage' integrase family. XerC subfamily. In terms of assembly, forms a cyclic heterotetrameric complex composed of two molecules of XerC and two molecules of XerD.

The protein localises to the cytoplasm. Its function is as follows. Site-specific tyrosine recombinase, which acts by catalyzing the cutting and rejoining of the recombining DNA molecules. The XerC-XerD complex is essential to convert dimers of the bacterial chromosome into monomers to permit their segregation at cell division. It also contributes to the segregational stability of plasmids. The sequence is that of Tyrosine recombinase XerC from Shewanella amazonensis (strain ATCC BAA-1098 / SB2B).